The following is a 757-amino-acid chain: Polyribonucleotide nucleotidyltransferase (757 aa).

Asp-489 and Asp-495 together coordinate Mg(2+). The 60-residue stretch at 556 to 615 (PKILCYKIDKDVVHKVIGSGGKTIRGISSDTSAKIDIDQNNYVYIMADTEEALMEAKTRV) folds into the KH domain. The S1 motif domain occupies 632 to 700 (GELYDGKIVS…SDGKIKLTMR (69 aa)). The tract at residues 702 to 757 (DEDRVGSGGSSSSPKKRFGAHPRKNGKDNRSNNSERGFNERSGSAEGSSISRKRFF) is disordered. A compositionally biased stretch (basic residues) spans 715 to 725 (PKKRFGAHPRK). Residues 732–751 (SNNSERGFNERSGSAEGSSI) are compositionally biased toward polar residues.

This sequence belongs to the polyribonucleotide nucleotidyltransferase family. Mg(2+) serves as cofactor.

Its subcellular location is the cytoplasm. The enzyme catalyses RNA(n+1) + phosphate = RNA(n) + a ribonucleoside 5'-diphosphate. In terms of biological role, involved in mRNA degradation. Catalyzes the phosphorolysis of single-stranded polyribonucleotides processively in the 3'- to 5'-direction. This Neorickettsia sennetsu (strain ATCC VR-367 / Miyayama) (Ehrlichia sennetsu) protein is Polyribonucleotide nucleotidyltransferase.